We begin with the raw amino-acid sequence, 227 residues long: uncharacterized protein (227 aa).

An ATP-binding site is contributed by G17–T24.

This is an uncharacterized protein from Methanocaldococcus jannaschii (strain ATCC 43067 / DSM 2661 / JAL-1 / JCM 10045 / NBRC 100440) (Methanococcus jannaschii).